Reading from the N-terminus, the 566-residue chain is Autophagy-related protein 22-1 (566 aa).

A helical membrane pass occupies residues 38-58; that stretch reads YPIAAEVFAVVAVGAFLPVIL. Asn-103 is a glycosylation site (N-linked (GlcNAc...) asparagine). The next 3 membrane-spanning stretches (helical) occupy residues 110–130, 146–168, and 179–199; these read SFAMYTFSAAVIVQAVTLVCF, AFAYTGSVASALFIFISPTVYFL, and SLGCSFVLLNAFLPLLVANHA. A glycan (N-linked (GlcNAc...) asparagine) is linked at Asn-200. 8 helical membrane passes run 242-262, 278-298, 351-371, 382-402, 416-436, 451-471, 488-510, and 519-539; these read GYGYMAAVFVQVISILILWLF, VILLLVGMWWAALTTPTLLWL, FLISWFLLSDAVATISGTAVL, IAIALLSITSIGSGIIGAFAW, ILLCCVAGMEMIPLYGLLGFI, WEIYPVAVLHGIVMGGVSSYA, FALYAVTDKGSSAFGPALVGWLV, and AFIFLAVLVVLPAPLLWMLDV. The tract at residues 547–566 is disordered; that stretch reads KAMADGEGRGRGTYERVREE.

Belongs to the ATG22 family.

The protein localises to the vacuole membrane. In terms of biological role, vacuolar effluxer which mediate the efflux of amino acids resulting from autophagic degradation. The release of autophagic amino acids allows the maintenance of protein synthesis and viability during nitrogen starvation. This chain is Autophagy-related protein 22-1 (ATG22-1), found in Phaeosphaeria nodorum (strain SN15 / ATCC MYA-4574 / FGSC 10173) (Glume blotch fungus).